The following is a 104-amino-acid chain: Pyrimidine/purine nucleoside phosphorylase (104 aa).

The protein belongs to the nucleoside phosphorylase PpnP family.

It carries out the reaction a purine D-ribonucleoside + phosphate = a purine nucleobase + alpha-D-ribose 1-phosphate. The enzyme catalyses adenosine + phosphate = alpha-D-ribose 1-phosphate + adenine. The catalysed reaction is cytidine + phosphate = cytosine + alpha-D-ribose 1-phosphate. It catalyses the reaction guanosine + phosphate = alpha-D-ribose 1-phosphate + guanine. It carries out the reaction inosine + phosphate = alpha-D-ribose 1-phosphate + hypoxanthine. The enzyme catalyses thymidine + phosphate = 2-deoxy-alpha-D-ribose 1-phosphate + thymine. The catalysed reaction is uridine + phosphate = alpha-D-ribose 1-phosphate + uracil. It catalyses the reaction xanthosine + phosphate = alpha-D-ribose 1-phosphate + xanthine. In terms of biological role, catalyzes the phosphorolysis of diverse nucleosides, yielding D-ribose 1-phosphate and the respective free bases. Can use uridine, adenosine, guanosine, cytidine, thymidine, inosine and xanthosine as substrates. Also catalyzes the reverse reactions. The chain is Pyrimidine/purine nucleoside phosphorylase from Trichlorobacter lovleyi (strain ATCC BAA-1151 / DSM 17278 / SZ) (Geobacter lovleyi).